We begin with the raw amino-acid sequence, 247 residues long: Capsid protein (247 aa).

Residues 3-20 (KRDAPWRLMAGTSKVSRS) carry the Bipartite nuclear localization signal motif. The Nuclear localization signal motif lies at 31–45 (KRDAWVNRPMYRKPR). The Nuclear export signal signature appears at 92–113 (ITHRVGKRFCVKSVYILGKIWM). The Bipartite nuclear localization signal signature appears at 191–238 (RRFWKVNNNVVYNHQEAGKYENHTENALLLYMACTHASNPVYATLKIR).

It belongs to the geminiviridae capsid protein family. In terms of assembly, homomultimer. Binds to single-stranded and double-stranded viral DNA. Interacts (via nuclear localization signals) with host importin alpha-1a.

The protein resides in the virion. Its subcellular location is the host nucleus. Its function is as follows. Encapsidates the viral DNA into characteristic twinned ('geminate') particles. Binds the genomic viral ssDNA and shuttles it into and out of the cell nucleus. The CP of bipartite geminiviruses is not required for cell-to-cell or systemic movement. This chain is Capsid protein, found in Solanum lycopersicum (Tomato).